The chain runs to 220 residues: Inner membrane-spanning protein YciB (220 aa).

6 consecutive transmembrane segments (helical) span residues 20–40, 57–77, 86–106, 123–143, 156–176, and 187–207; these read EVPPLLKLALELGPLLVFFFA, IGAPIFLATALFMAATVIALA, LPIMPLVSGIVVLVFGALTLW, LFGGILLGGLFFGKSLLGYVF, KLTLRWALFFIFLAIVNEIVW, and FKVWGIMPITIVFTLLQMPLI.

This sequence belongs to the YciB family.

The protein localises to the cell inner membrane. Plays a role in cell envelope biogenesis, maintenance of cell envelope integrity and membrane homeostasis. The protein is Inner membrane-spanning protein YciB of Brucella melitensis biotype 2 (strain ATCC 23457).